Here is a 441-residue protein sequence, read N- to C-terminus: Probable cytosolic Fe-S cluster assembly factor v1g210509 (441 aa).

The [4Fe-4S] cluster site is built by Cys24, Cys72, Cys75, Cys78, Cys196, Cys252, and Cys401.

This sequence belongs to the NARF family.

In terms of biological role, component of the cytosolic iron-sulfur (Fe/S) protein assembly machinery. Required for maturation of extramitochondrial Fe/S proteins. The sequence is that of Probable cytosolic Fe-S cluster assembly factor v1g210509 from Nematostella vectensis (Starlet sea anemone).